Here is a 132-residue protein sequence, read N- to C-terminus: Large ribosomal subunit protein bL17 (132 aa).

The protein belongs to the bacterial ribosomal protein bL17 family. Part of the 50S ribosomal subunit. Contacts protein L32.

This chain is Large ribosomal subunit protein bL17, found in Anaplasma phagocytophilum (strain HZ).